The primary structure comprises 163 residues: NADH-quinone oxidoreductase subunit I (163 aa).

2 4Fe-4S ferredoxin-type domains span residues 53 to 83 and 94 to 123; these read LRRY…IEAG and VRYD…EGPN. Positions 63, 66, 69, 73, 103, 106, 109, and 113 each coordinate [4Fe-4S] cluster.

Belongs to the complex I 23 kDa subunit family. NDH-1 is composed of 14 different subunits. Subunits NuoA, H, J, K, L, M, N constitute the membrane sector of the complex. It depends on [4Fe-4S] cluster as a cofactor.

Its subcellular location is the cell inner membrane. The enzyme catalyses a quinone + NADH + 5 H(+)(in) = a quinol + NAD(+) + 4 H(+)(out). In terms of biological role, NDH-1 shuttles electrons from NADH, via FMN and iron-sulfur (Fe-S) centers, to quinones in the respiratory chain. The immediate electron acceptor for the enzyme in this species is believed to be ubiquinone. Couples the redox reaction to proton translocation (for every two electrons transferred, four hydrogen ions are translocated across the cytoplasmic membrane), and thus conserves the redox energy in a proton gradient. The chain is NADH-quinone oxidoreductase subunit I from Brucella suis (strain ATCC 23445 / NCTC 10510).